We begin with the raw amino-acid sequence, 140 residues long: Nucleoside diphosphate kinase (140 aa).

ATP is bound by residues K11, F59, R87, T93, R104, and N114. H117 (pros-phosphohistidine intermediate) is an active-site residue.

This sequence belongs to the NDK family. In terms of assembly, homotetramer. Mg(2+) is required as a cofactor.

The protein localises to the cytoplasm. The enzyme catalyses a 2'-deoxyribonucleoside 5'-diphosphate + ATP = a 2'-deoxyribonucleoside 5'-triphosphate + ADP. The catalysed reaction is a ribonucleoside 5'-diphosphate + ATP = a ribonucleoside 5'-triphosphate + ADP. Major role in the synthesis of nucleoside triphosphates other than ATP. The ATP gamma phosphate is transferred to the NDP beta phosphate via a ping-pong mechanism, using a phosphorylated active-site intermediate. In Novosphingobium aromaticivorans (strain ATCC 700278 / DSM 12444 / CCUG 56034 / CIP 105152 / NBRC 16084 / F199), this protein is Nucleoside diphosphate kinase.